Consider the following 217-residue polypeptide: Large ribosomal subunit protein uL3 (217 aa).

Over residues 133–145 (GRASHGNSRSHNV) the composition is skewed to polar residues. A disordered region spans residues 133–153 (GRASHGNSRSHNVPGSIGMAQ). Residue glutamine 153 is modified to N5-methylglutamine.

The protein belongs to the universal ribosomal protein uL3 family. In terms of assembly, part of the 50S ribosomal subunit. Forms a cluster with proteins L14 and L19. Methylated by PrmB.

Its function is as follows. One of the primary rRNA binding proteins, it binds directly near the 3'-end of the 23S rRNA, where it nucleates assembly of the 50S subunit. This chain is Large ribosomal subunit protein uL3, found in Ralstonia pickettii (strain 12J).